We begin with the raw amino-acid sequence, 207 residues long: Nitrile hydratase subunit alpha (207 aa).

Residues Cys-110, Cys-113, Ser-114, and Cys-115 each coordinate Fe(3+). The residue at position 113 (Cys-113) is a Cysteine sulfinic acid (-SO2H). Cys-115 carries the post-translational modification Cysteine sulfenic acid (-SOH).

Belongs to the nitrile hydratase subunit alpha family. Heterodimer of an alpha and a beta chain. Fe(3+) serves as cofactor. Post-translationally, oxidation on Cys-113 is essential for the activity. Oxidation on Cys-115 stabilizes the Fe-NO ligand coordinated in the inactive form.

The catalysed reaction is an aliphatic primary amide = an aliphatic nitrile + H2O. Its activity is regulated as follows. Inactivated by nitrosylation of the iron center in the dark and activated by photo-induced nitric oxide (NO) release. Inactivated by oxidation of Cys-115 to a sulfenic acid. Its function is as follows. NHase catalyzes the hydration of various nitrile compounds to the corresponding amides. Industrial production of acrylamide is now being developed using some of the enzymes of this class. This chain is Nitrile hydratase subunit alpha (nthA), found in Rhodococcus erythropolis (Arthrobacter picolinophilus).